The sequence spans 246 residues: Pyridoxine 5'-phosphate synthase (246 aa).

Asparagine 7 provides a ligand contact to 3-amino-2-oxopropyl phosphate. 9–10 contributes to the 1-deoxy-D-xylulose 5-phosphate binding site; the sequence is DH. Arginine 18 contributes to the 3-amino-2-oxopropyl phosphate binding site. Histidine 43 serves as the catalytic Proton acceptor. 2 residues coordinate 1-deoxy-D-xylulose 5-phosphate: arginine 45 and histidine 50. Glutamate 70 serves as the catalytic Proton acceptor. Residue threonine 100 coordinates 1-deoxy-D-xylulose 5-phosphate. Histidine 190 functions as the Proton donor in the catalytic mechanism. Residues glycine 191 and 212-213 each bind 3-amino-2-oxopropyl phosphate; that span reads GH.

This sequence belongs to the PNP synthase family. In terms of assembly, homooctamer; tetramer of dimers.

The protein resides in the cytoplasm. It carries out the reaction 3-amino-2-oxopropyl phosphate + 1-deoxy-D-xylulose 5-phosphate = pyridoxine 5'-phosphate + phosphate + 2 H2O + H(+). It participates in cofactor biosynthesis; pyridoxine 5'-phosphate biosynthesis; pyridoxine 5'-phosphate from D-erythrose 4-phosphate: step 5/5. In terms of biological role, catalyzes the complicated ring closure reaction between the two acyclic compounds 1-deoxy-D-xylulose-5-phosphate (DXP) and 3-amino-2-oxopropyl phosphate (1-amino-acetone-3-phosphate or AAP) to form pyridoxine 5'-phosphate (PNP) and inorganic phosphate. This is Pyridoxine 5'-phosphate synthase from Bordetella petrii (strain ATCC BAA-461 / DSM 12804 / CCUG 43448).